The following is a 252-amino-acid chain: Proteasome subunit alpha type-7-1B (252 aa).

Belongs to the peptidase T1A family. The 26S proteasome consists of a 20S proteasome core and two 19S regulatory subunits. The 20S proteasome core is composed of 28 subunits that are arranged in four stacked rings, resulting in a barrel-shaped structure. The two end rings are each formed by seven alpha subunits, and the two central rings are each formed by seven beta subunits. The catalytic chamber with the active sites is on the inside of the barrel. In terms of tissue distribution, testis specific.

The protein localises to the cytoplasm. It is found in the nucleus. In terms of biological role, the proteasome is a multicatalytic proteinase complex which is characterized by its ability to cleave peptides with Arg, Phe, Tyr, Leu, and Glu adjacent to the leaving group at neutral or slightly basic pH. The proteasome has an ATP-dependent proteolytic activity. This is Proteasome subunit alpha type-7-1B (Prosalpha4T2) from Drosophila melanogaster (Fruit fly).